A 481-amino-acid polypeptide reads, in one-letter code: Protein hedgehog (481 aa).

C93 is lipidated: N-palmitoyl cysteine. Ca(2+)-binding residues include E157, E158, D163, T193, E194, D197, and D199. G265 is lipidated: Cholesterol glycine ester.

The protein belongs to the hedgehog family. Interacts with shf. In terms of processing, the C-terminal part of the hedgehog protein precursor displays an autoproteolysis activity that results in the cleavage of the full-length protein into two parts (N-product and C-product). In addition, the C-terminal part displays a cholesterol transferase activity that results by the covalent attachment of a cholesterol moiety to the C-terminal of the newly generated N-product. The N-product is the active species in both local and long-range signaling, whereas the C-product has no signaling activity. Cholesterylation is required for N-product targeting to lipid rafts and multimerization. Post-translationally, N-palmitoylation by Rasp of the hedgehog N-product, within the secretory pathway, is required for the embryonic and larval patterning activities of the hedgehog signal.

Its subcellular location is the nucleus. The protein localises to the cytoplasm. It localises to the cell membrane. The enzyme catalyses glycyl-L-cysteinyl-[protein] + cholesterol + H(+) = [protein]-C-terminal glycyl cholesterol ester + N-terminal L-cysteinyl-[protein]. The C-terminal part of the hedgehog protein precursor displays an autoproteolysis activity that results in the cleavage of the full-length protein into two parts (N-product and C-product). In addition, the C-terminal part displays a cholesterol transferase activity that results by the covalent attachment of a cholesterol moiety to the C-terminal of the newly generated N-product. Once cleaved, the C-product has no signaling activity and diffuses from the cell. Its function is as follows. The dually lipidated hedgehog protein N-product is a morphogen which is essential for a variety of patterning events during development. Establishes the anterior-posterior axis of the embryonic segments and patterns the larval imaginal disks. Binds to the patched (ptc) receptor, which functions in association with smoothened (smo), to activate the transcription of target genes wingless (wg), decapentaplegic (dpp) and ptc. In the absence of hh, ptc represses the constitutive signaling activity of smo through fused (fu). Essential component of a signaling pathway which regulates the Duox-dependent gut immune response to bacterial uracil; required to activate Cad99C-dependent endosome formation, norpA-dependent Ca2+ mobilization and p38 MAPK, which are essential steps in the Duox-dependent production of reactive oxygen species (ROS) in response to intestinal bacterial infection. During photoreceptor differentiation, it up-regulates transcription of Ubr3, which in turn promotes the hh-signaling pathway by mediating the ubiquitination and degradation of cos. The protein is Protein hedgehog (hh-1) of Drosophila pseudoobscura pseudoobscura (Fruit fly).